We begin with the raw amino-acid sequence, 165 residues long: Small ribosomal subunit protein uS5 (165 aa).

In terms of domain architecture, S5 DRBM spans leucine 10 to valine 73.

The protein belongs to the universal ribosomal protein uS5 family. Part of the 30S ribosomal subunit. Contacts proteins S4 and S8.

Functionally, with S4 and S12 plays an important role in translational accuracy. In terms of biological role, located at the back of the 30S subunit body where it stabilizes the conformation of the head with respect to the body. In Clostridium botulinum (strain ATCC 19397 / Type A), this protein is Small ribosomal subunit protein uS5.